The chain runs to 1208 residues: E3 ubiquitin-protein ligase DZIP3 (1208 aa).

The span at 10–29 (VRHPAVEDQRKEETENKLEK) shows a compositional bias: basic and acidic residues. 2 disordered regions span residues 10–38 (VRHPAVEDQRKEETENKLEKSSGQLNKQE) and 637–698 (GTSI…PHSV). Coiled coils occupy residues 14–43 (AVEDQRKEETENKLEKSSGQLNKQENDIPT), 647–676 (ESLKDLQEVKSKQRKKKKTKNKKNKDSKED), 792–853 (IASL…SKLN), and 904–939 (QLKAAVDSWNAIVADVRNKIAFLRTQYNEQINKVKQ). A compositionally biased stretch (polar residues) spans 637–647 (GTSIPSESSTE). The segment covering 648–657 (SLKDLQEVKS) has biased composition (basic and acidic residues). Over residues 658-669 (KQRKKKKTKNKK) the composition is skewed to basic residues. The span at 670–693 (NKDSKEDQVPYVVEKEEQLRKEQA) shows a compositional bias: basic and acidic residues. The disordered stretch occupies residues 1088–1145 (KSQSQGKSVSNVNCVSPSHSPSQPDAAQPPKPAWRPLTSQGPATWEGASNPDEEEEEE). The span at 1089–1112 (SQSQGKSVSNVNCVSPSHSPSQPD) shows a compositional bias: polar residues. The segment at 1148–1188 (CVICHENLSPENLSVLPCAHKFHAQCIRPWLMQQGTCPTCR) adopts an RING-type; atypical zinc-finger fold.

In terms of assembly, interacts with DAZ proteins. Widely expressed at low level. Highly expressed in skeletal muscle, kidney and heart. Expressed at low level in placenta, lung, brain, liver and pancreas.

It localises to the cytoplasm. It catalyses the reaction S-ubiquitinyl-[E2 ubiquitin-conjugating enzyme]-L-cysteine + [acceptor protein]-L-lysine = [E2 ubiquitin-conjugating enzyme]-L-cysteine + N(6)-ubiquitinyl-[acceptor protein]-L-lysine.. The protein operates within protein modification; protein ubiquitination. Its function is as follows. E3 Ubiquitin ligase proteins mediate ubiquitination and subsequent proteasomal degradation of target proteins. E3 ubiquitin ligases accept ubiquitin from an E2 ubiquitin-conjugating enzyme in the form of a thioester and then directly transfers the ubiquitin to targeted substrates. Able to specifically bind RNA. This Homo sapiens (Human) protein is E3 ubiquitin-protein ligase DZIP3 (DZIP3).